Reading from the N-terminus, the 212-residue chain is uncharacterized protein (212 aa).

Residues glycine 53, glutamate 74, and aspartate 97 each coordinate S-adenosyl-L-methionine.

Belongs to the methyltransferase superfamily. YrrT family.

Functionally, could be a S-adenosyl-L-methionine-dependent methyltransferase. This is an uncharacterized protein from Bacillus cereus (strain ATCC 10987 / NRS 248).